The sequence spans 691 residues: Guanylate cyclase soluble subunit alpha-1 (691 aa).

Ser-267 carries the post-translational modification Phosphoserine. A Guanylate cyclase domain is found at 480-607 (VTMLFSDIVG…GNNVTLANKF (128 aa)).

It belongs to the adenylyl cyclase class-4/guanylyl cyclase family. As to quaternary structure, the active enzyme is formed by a heterodimer of an alpha and a beta subunit. Heterodimer with GUCY1B1. The cofactor is Mg(2+). It depends on Mn(2+) as a cofactor.

It localises to the cytoplasm. It catalyses the reaction GTP = 3',5'-cyclic GMP + diphosphate. Its activity is regulated as follows. Activated by nitric oxide in the presence of magnesium or manganese ions. This chain is Guanylate cyclase soluble subunit alpha-1 (Gucy1a1), found in Mus musculus (Mouse).